A 387-amino-acid polypeptide reads, in one-letter code: MFFLSLIIRNITVVNASGRDEQMDVWMKDGKIAQIAQHIHAQGVDQLEGSGKFLLPGFIDMHIHGSAQMDTMDASDEGLHIHGPITIKEGTTSFLATTMTQSFDWFDRAQRQCGNNFSPKSDEAEVLGLHIEGPFVSKQRAGAQPLDYIVQPDMEVIKKWQALSGQKIKQITLAPEEPNGMAAVQSLSESGVIVSIGHSDATFEQMQEAVQLGASQGTHLYNQMRPFHHRDPGVVGGVLLVDAIKAELIVDFIHMHEGAVEMAYRLKGADGIILITDAMRAKGMPYGEYDLGGQLVHVTESGAHLSNGSLAGSILTMDQAVRNMRQITNCTLEELVKMSSYNAAQQLKLTNKGQLTEGYDADAVIVDEHLLLHQTIKAGRIRVQTNN.

The a divalent metal cation site is built by His62, His64, and Glu132. Substrate is bound at residue 143-144; it reads AQ. Residues His198 and His219 each contribute to the a divalent metal cation site. Substrate-binding positions include 222–223, Arg230, and 251–254; these read NQ and DFIH. Residue Asp277 coordinates a divalent metal cation. Asp277 (proton donor/acceptor) is an active-site residue. Position 310–312 (310–312) interacts with substrate; the sequence is LAG.

It belongs to the metallo-dependent hydrolases superfamily. NagA family. Homodimer. The cofactor is a divalent metal cation.

It carries out the reaction N-acetyl-D-glucosamine 6-phosphate + H2O = D-glucosamine 6-phosphate + acetate. Its pathway is amino-sugar metabolism; N-acetylneuraminate degradation; D-fructose 6-phosphate from N-acetylneuraminate: step 4/5. In terms of biological role, involved in the first committed step in the biosynthesis of amino-sugar-nucleotides. Catalyzes the hydrolysis of the N-acetyl group of N-acetylglucosamine-6-phosphate (GlcNAc-6-P) to yield glucosamine 6-phosphate and acetate. This chain is N-acetylglucosamine-6-phosphate deacetylase (nagA), found in Lysinibacillus sphaericus (Bacillus sphaericus).